Here is a 314-residue protein sequence, read N- to C-terminus: Epithelial-stromal interaction protein 1 (314 aa).

3 disordered regions span residues 1-72 (MYTR…PNES), 227-272 (WAGS…RAQI), and 289-314 (QGKS…SWGL). A compositionally biased stretch (basic and acidic residues) spans 18 to 30 (SRDHAGAGQRREL). Residue Ser39 is modified to Phosphoserine. Residues 71–180 (ESRRQKIQRI…QEDIRRATFR (110 aa)) are a coiled coil. Basic and acidic residues predominate over residues 232–272 (AHRDSPQKEDNPRLQKTRDGHQKNKLLETKGQHQEEERAQI). The segment covering 305 to 314 (NMNSTDSWGL) has biased composition (polar residues).

As to expression, expressed in the spleen, with expression in T cells, B cells, natural killer cells and natural killer T cells and high expression in monocytes and macrophages.

Plays a role in M1 macrophage polarization and is required for the proper regulation of gene expression during M1 versus M2 macrophage differentiation. Might play a role in RELA/p65 and STAT1 phosphorylation and nuclear localization upon activation of macrophages. The chain is Epithelial-stromal interaction protein 1 (Epsti1) from Mus musculus (Mouse).